The sequence spans 706 residues: Polyribonucleotide nucleotidyltransferase (706 aa).

The Mg(2+) site is built by aspartate 490 and aspartate 496. Residues 556-615 (PRIETMQIPTDKIREVIGSGGKVIREIVEVSGAKVDINDEGIIKIASPNGDSIQKAYDMI) form the KH domain. Residues 625–693 (GKIYKGKVVK…DRGKVRLAMK (69 aa)) enclose the S1 motif domain.

It belongs to the polyribonucleotide nucleotidyltransferase family. Mg(2+) is required as a cofactor.

It is found in the cytoplasm. The enzyme catalyses RNA(n+1) + phosphate = RNA(n) + a ribonucleoside 5'-diphosphate. In terms of biological role, involved in mRNA degradation. Catalyzes the phosphorolysis of single-stranded polyribonucleotides processively in the 3'- to 5'-direction. The chain is Polyribonucleotide nucleotidyltransferase from Jannaschia sp. (strain CCS1).